Consider the following 218-residue polypeptide: Cytidylate kinase (218 aa).

10–18 (GPAGSGKST) contacts ATP.

Belongs to the cytidylate kinase family. Type 1 subfamily.

Its subcellular location is the cytoplasm. The enzyme catalyses CMP + ATP = CDP + ADP. It carries out the reaction dCMP + ATP = dCDP + ADP. This is Cytidylate kinase from Fusobacterium nucleatum subsp. nucleatum (strain ATCC 25586 / DSM 15643 / BCRC 10681 / CIP 101130 / JCM 8532 / KCTC 2640 / LMG 13131 / VPI 4355).